Consider the following 366-residue polypeptide: Gelsolin-like protein 2 (366 aa).

Gelsolin-like repeat units follow at residues asparagine 55–leucine 139, lysine 177–tyrosine 252, and lysine 286–lysine 327. Residues lysine 100–leucine 116 form an actin binding region. The interval aspartate 104–cysteine 107 is actin-actin interfilament contact point.

The protein belongs to the villin/gelsolin family. As to quaternary structure, interacts with actin monomers and filaments. Expressed in circular and longitudinal muscle, pseudohearts, pharynx and gizzard. Not expressed in seminal vesicles.

It is found in the cytoplasm. Its subcellular location is the cytoskeleton. Functionally, calcium-regulated protein that binds to the plus (or barbed) ends of actin monomers or filaments, preventing monomer exchange (end-blocking or capping). Can promote the assembly of monomers into filaments (nucleation) as well as sever existing filaments. The chain is Gelsolin-like protein 2 from Lumbricus terrestris (Common earthworm).